The sequence spans 146 residues: Hemoglobin subunit beta (146 aa).

N-acetylvaline is present on V1. The region spanning 2–146 (HLTAEEKAAV…VANALAHKYH (145 aa)) is the Globin domain. At T12 the chain carries Phosphothreonine. S44 carries the phosphoserine modification. An N6-acetyllysine modification is found at K59. H63 lines the heme b pocket. N6-acetyllysine is present on K82. Position 92 (H92) interacts with heme b. C93 carries the S-nitrosocysteine modification. N6-acetyllysine is present on K144.

Belongs to the globin family. As to quaternary structure, heterotetramer of two alpha chains and two beta chains. As to expression, red blood cells.

In terms of biological role, involved in oxygen transport from the lung to the various peripheral tissues. The protein is Hemoglobin subunit beta (HBB) of Mellivora capensis (Ratel).